We begin with the raw amino-acid sequence, 338 residues long: Nucleoid-associated protein PM1885 (338 aa).

This sequence belongs to the YejK family.

Its subcellular location is the cytoplasm. It is found in the nucleoid. The polypeptide is Nucleoid-associated protein PM1885 (Pasteurella multocida (strain Pm70)).